A 21-amino-acid chain; its full sequence is thr operon leader peptide (21 aa).

This sequence belongs to the thr operon leader peptide family.

Functionally, this protein is involved in control of the biosynthesis of threonine. This is thr operon leader peptide from Shigella boydii serotype 18 (strain CDC 3083-94 / BS512).